The chain runs to 155 residues: Small ribosomal subunit protein uS7 (155 aa).

It belongs to the universal ribosomal protein uS7 family. In terms of assembly, part of the 30S ribosomal subunit. Contacts proteins S9 and S11.

In terms of biological role, one of the primary rRNA binding proteins, it binds directly to 16S rRNA where it nucleates assembly of the head domain of the 30S subunit. Is located at the subunit interface close to the decoding center, probably blocks exit of the E-site tRNA. In Desulforapulum autotrophicum (strain ATCC 43914 / DSM 3382 / VKM B-1955 / HRM2) (Desulfobacterium autotrophicum), this protein is Small ribosomal subunit protein uS7.